The sequence spans 341 residues: MPRYGYTTGTCATAATRAAIIALATGRKLKSVEVKLPSKKNAIININDVEIKEDYAMASVVKDGGDDPDVTTGLVIYSKVSFTDSGIYVDGGEGIGRVTKEGLPVKPGNAAINPVPMRMIKNTAMETLSELNISSGLKIIISAPGGDKVALKTCNPKLGIIGGISILGTTGIVVPYSAASWRASIVLAMRVAIKSNYDTVILTTGSRTEEYARKLFNDRYPCIDVGDFIGFSIRRAAENGIKNIIIACMPGKASKLAMGMEDTSSRNSGVDFDFIYKMALSINIKNAEIIKNSNTVNALVDEFTDDGLFKLMAELAKINLRRISNINIDVIIFDMSGNVIS.

This sequence belongs to the CbiD family.

The enzyme catalyses Co-precorrin-5B + S-adenosyl-L-methionine = Co-precorrin-6A + S-adenosyl-L-homocysteine. Its pathway is cofactor biosynthesis; adenosylcobalamin biosynthesis; cob(II)yrinate a,c-diamide from sirohydrochlorin (anaerobic route): step 6/10. Catalyzes the methylation of C-1 in cobalt-precorrin-5B to form cobalt-precorrin-6A. The chain is Cobalt-precorrin-5B C(1)-methyltransferase from Picrophilus torridus (strain ATCC 700027 / DSM 9790 / JCM 10055 / NBRC 100828 / KAW 2/3).